Consider the following 491-residue polypeptide: Acetyl-coenzyme A carboxylase carboxyl transferase subunit beta (491 aa).

Residues 132-491 (LWNQCENCFI…ISELLNLHAL (360 aa)) enclose the CoA carboxyltransferase N-terminal domain. Zn(2+) contacts are provided by Cys136, Cys139, Cys155, and Cys158. The C4-type zinc finger occupies 136–158 (CENCFIPNYKKVLKSNMQICEEC). Positions 252–262 (EKVEEWTKPDL) are enriched in basic and acidic residues. 2 disordered regions span residues 252 to 273 (EKVE…DEER) and 279 to 298 (DKGE…EDDD). Acidic residues predominate over residues 284–298 (SQEIEDSEANDEDDD).

The protein belongs to the AccD/PCCB family. As to quaternary structure, acetyl-CoA carboxylase is a heterohexamer composed of biotin carboxyl carrier protein, biotin carboxylase and 2 subunits each of ACCase subunit alpha and ACCase plastid-coded subunit beta (accD). Requires Zn(2+) as cofactor.

Its subcellular location is the plastid. It carries out the reaction N(6)-carboxybiotinyl-L-lysyl-[protein] + acetyl-CoA = N(6)-biotinyl-L-lysyl-[protein] + malonyl-CoA. It participates in lipid metabolism; malonyl-CoA biosynthesis; malonyl-CoA from acetyl-CoA: step 1/1. Component of the acetyl coenzyme A carboxylase (ACC) complex. Biotin carboxylase (BC) catalyzes the carboxylation of biotin on its carrier protein (BCCP) and then the CO(2) group is transferred by the transcarboxylase to acetyl-CoA to form malonyl-CoA. The polypeptide is Acetyl-coenzyme A carboxylase carboxyl transferase subunit beta (Cuscuta gronovii (Common dodder)).